Here is a 374-residue protein sequence, read N- to C-terminus: Type II methyltransferase M.BbvI (374 aa).

An SAM-dependent MTase C5-type domain is found at 3-347; the sequence is FRKGELFCGP…EAVLKTFARI (345 aa). Residue Cys-92 is part of the active site.

Belongs to the class I-like SAM-binding methyltransferase superfamily. C5-methyltransferase family.

It catalyses the reaction a 2'-deoxycytidine in DNA + S-adenosyl-L-methionine = a 5-methyl-2'-deoxycytidine in DNA + S-adenosyl-L-homocysteine + H(+). A methylase, recognizes the double-stranded sequence 5'-GCAGC-3', methylates C-2 on both strands, and protects the DNA from cleavage by the BbvI endonuclease. The sequence is that of Type II methyltransferase M.BbvI (bbvIM) from Brevibacillus brevis (Bacillus brevis).